The following is a 737-amino-acid chain: Ribosome-releasing factor 2, mitochondrial (737 aa).

Residues 1–29 constitute a mitochondrion transit peptide; sequence MLKYALHSGGMPRNRLLRQLSAHIFRRSY. Residues 31 to 310 form the tr-type G domain; the sequence is SNIRNIGILA…AVNTYLPAPE (280 aa). Residues 40-47, 104-108, and 158-161 each bind GTP; these read AHIDAGKT, DTPGH, and NKMD.

The protein belongs to the TRAFAC class translation factor GTPase superfamily. Classic translation factor GTPase family. EF-G/EF-2 subfamily.

The protein resides in the mitochondrion. Mitochondrial GTPase that mediates the disassembly of ribosomes from messenger RNA at the termination of mitochondrial protein biosynthesis. Not involved in the GTP-dependent ribosomal translocation step during translation elongation. This is Ribosome-releasing factor 2, mitochondrial from Drosophila pseudoobscura pseudoobscura (Fruit fly).